A 380-amino-acid polypeptide reads, in one-letter code: Probable G-protein coupled receptor 132 (380 aa).

Residues methionine 1–leucine 45 are Extracellular-facing. Asparagine 35 carries N-linked (GlcNAc...) asparagine glycosylation. Residues valine 46–leucine 68 form a helical membrane-spanning segment. Residues leucine 69–valine 79 lie on the Cytoplasmic side of the membrane. The chain crosses the membrane as a helical span at residues tyrosine 80–isoleucine 102. At arginine 103–lysine 116 the chain is on the extracellular side. Residues cysteine 115 and cysteine 186 are joined by a disulfide bond. A helical transmembrane segment spans residues valine 117 to cysteine 138. At aspartate 139–threonine 158 the chain is on the cytoplasmic side. The helical transmembrane segment at alanine 159–phenylalanine 178 threads the bilayer. The Extracellular segment spans residues glutamine 179 to alanine 197. Residues glycine 198–histidine 220 form a helical membrane-spanning segment. The Cytoplasmic segment spans residues arginine 221–alanine 246. A helical transmembrane segment spans residues valine 247–phenylalanine 269. Residues serine 270–threonine 288 are Extracellular-facing. The helical transmembrane segment at alanine 289–alanine 311 threads the bilayer. Residues threonine 312–cysteine 380 are Cytoplasmic-facing.

It belongs to the G-protein coupled receptor 1 family. In terms of tissue distribution, highly expressed in macrophages and hematopoietic tissues rich in lymphocytes, like spleen and thymus. Weakly expressed in heart and lung. In atherosclerotic plaques, expression is observed around the lipid core and at the shoulder region.

The protein resides in the cell membrane. Functionally, may be a receptor for oxidized free fatty acids derived from linoleic and arachidonic acids such as 9-hydroxyoctadecadienoic acid (9-HODE). Activates a G alpha protein, most likely G alpha(q). May be involved in apoptosis. Functions at the G2/M checkpoint to delay mitosis. May function as a sensor that monitors the oxidative states and mediates appropriate cellular responses such as secretion of paracrine signals and attenuation of proliferation. May mediate ths accumulation of intracellular inositol phosphates at acidic pH through proton-sensing activity. This Homo sapiens (Human) protein is Probable G-protein coupled receptor 132 (GPR132).